The sequence spans 1030 residues: ADAMTS-like protein 4 (1030 aa).

A signal peptide spans Met-1–Asp-24. The region spanning Gly-47–Pro-91 is the TSP type-1 1 domain. Disordered regions lie at residues His-73–Met-150 and Leu-168–Thr-306. Composition is skewed to polar residues over residues Lys-176–Pro-186, Gln-211–Pro-237, and Pro-245–Gly-257. N-linked (GlcNAc...) asparagine glycosylation is found at Asn-451 and Asn-731. TSP type-1 domains are found at residues Cys-681 to Leu-740, Cys-741 to Thr-800, Trp-803 to Glu-865, Lys-866 to Ala-925, and Cys-926 to Asn-982. In terms of domain architecture, PLAC spans Pro-985 to Leu-1022.

In terms of assembly, interacts with CTSB. Interacts with FBN1. In terms of processing, glycosylated. Can be O-fucosylated by POFUT2 on a serine or a threonine residue found within the consensus sequence C1-X(2)-(S/T)-C2-G of the TSP type-1 repeat domains where C1 and C2 are the first and second cysteine residue of the repeat, respectively. Fucosylated repeats can then be further glycosylated by the addition of a beta-1,3-glucose residue by the glucosyltransferase, B3GALTL. Fucosylation mediates the efficient secretion of ADAMTS family members. Can also be C-glycosylated with one or two mannose molecules on tryptophan residues within the consensus sequence W-X-X-W of the TPRs, and N-glycosylated. These other glycosylations can also facilitate secretion.

The protein resides in the secreted. The protein localises to the extracellular space. It localises to the extracellular matrix. Its function is as follows. Positive regulation of apoptosis. May facilitate FBN1 microfibril biogenesis. This chain is ADAMTS-like protein 4, found in Rattus norvegicus (Rat).